A 626-amino-acid polypeptide reads, in one-letter code: FAD-binding monooxygenase moxY (626 aa).

Over residues 1-23 (MAPFLSAHGESASSSSSSSPTPS) the composition is skewed to low complexity. Residues 1-47 (MAPFLSAHGESASSSSSSSPTPSRHTRNQHVDYSTPGSTGYNIPQNT) form a disordered region. Residues 31–47 (VDYSTPGSTGYNIPQNT) show a composition bias toward polar residues. FAD is bound by residues 96–99 (TWLE), 108–109 (DI), and Y114. 106–108 (GCD) is an NADP(+) binding site. NADP(+)-binding positions include 243-249 (SGASSIQ) and 266-267 (RT).

The protein belongs to the FAD-binding monooxygenase family. Requires FAD as cofactor.

It functions in the pathway mycotoxin biosynthesis. Functionally, FAD-binding monooxygenase; part of the fragmented gene cluster that mediates the biosynthesis of dothistromin (DOTH), a polyketide toxin very similar in structure to the aflatoxin precursor, versicolorin B. The first step of the pathway is the conversion of acetate to norsolorinic acid (NOR) and requires the fatty acid synthase subunits hexA and hexB, as well as the polyketide synthase pksA. PksA combines a hexanoyl starter unit and 7 malonyl-CoA extender units to synthesize the precursor NOR. The hexanoyl starter unit is provided to the acyl-carrier protein (ACP) domain by the fungal fatty acid synthase hexA/hexB. The second step is the conversion of NOR to averantin (AVN) and requires the norsolorinic acid ketoreductase nor1, which catalyzes the dehydration of norsolorinic acid to form (1'S)-averantin. The cytochrome P450 monooxygenase avnA then catalyzes the hydroxylation of AVN to 5'hydroxyaverantin (HAVN). The next step is performed by adhA that transforms HAVN to averufin (AVF). Averufin might then be converted to hydroxyversicolorone by cypX and avfA. Hydroxyversicolorone is further converted versiconal hemiacetal acetate (VHA) by moxY. VHA is then the substrate for the versiconal hemiacetal acetate esterase est1 to yield versiconal (VAL). Versicolorin B synthase vbsA then converts VAL to versicolorin B (VERB) by closing the bisfuran ring. Then, the activity of the versicolorin B desaturase verB leads to versicolorin A (VERA). DotB, a predicted chloroperoxidase, may perform epoxidation of the A-ring of VERA. Alternatively, a cytochrome P450, such as cypX or avnA could catalyze this step. It is also possible that another, uncharacterized, cytochrome P450 enzyme is responsible for this step. Opening of the epoxide could potentially be achieved by the epoxide hydrolase epoA. However, epoA seems not to be required for DOTH biosynthesis, but other epoxide hydrolases may have the ability to complement this hydrolysis. Alternatively, opening of the epoxide ring could be achieved non-enzymatically. The next step is the deoxygenation of ring A to yield the 5,8-dihydroxyanthraquinone which is most likely catalyzed by the NADPH dehydrogenase encoded by ver1. The last stages of DOTH biosynthesis are proposed to involve hydroxylation of the bisfuran. OrdB and norB might have oxidative roles here. An alternative possibility is that cytochrome P450 monoogenases such as avnA and cypX might perform these steps in addition to previously proposed steps. This chain is FAD-binding monooxygenase moxY, found in Dothistroma septosporum (Red band needle blight fungus).